The sequence spans 298 residues: Tyrosine recombinase XerD (298 aa).

Residues 3 to 88 (TLEHPLIDRF…GLRGFYRYCL (86 aa)) enclose the Core-binding (CB) domain. The region spanning 109–292 (PLPKSLSEAD…ARARLQDLHA (184 aa)) is the Tyr recombinase domain. Residues arginine 149, lysine 173, histidine 244, arginine 247, and histidine 270 contribute to the active site. Tyrosine 279 (O-(3'-phospho-DNA)-tyrosine intermediate) is an active-site residue.

It belongs to the 'phage' integrase family. XerD subfamily. In terms of assembly, forms a cyclic heterotetrameric complex composed of two molecules of XerC and two molecules of XerD.

The protein resides in the cytoplasm. Its function is as follows. Site-specific tyrosine recombinase, which acts by catalyzing the cutting and rejoining of the recombining DNA molecules. The XerC-XerD complex is essential to convert dimers of the bacterial chromosome into monomers to permit their segregation at cell division. It also contributes to the segregational stability of plasmids. This is Tyrosine recombinase XerD from Pseudomonas aeruginosa (strain ATCC 15692 / DSM 22644 / CIP 104116 / JCM 14847 / LMG 12228 / 1C / PRS 101 / PAO1).